The sequence spans 70 residues: Protein FlmC (70 aa).

Functionally, component of a type I toxin-antitoxin (TA) system. Either this protein or sequences upstream of it are required for translation of downstream flmA; this could be translationally coupled to flmA. This Escherichia coli (strain K12) protein is Protein FlmC (flmC).